The primary structure comprises 263 residues: Sulfur carrier protein FdhD (263 aa).

Catalysis depends on C107, which acts as the Cysteine persulfide intermediate.

It belongs to the FdhD family.

The protein localises to the cytoplasm. Its function is as follows. Required for formate dehydrogenase (FDH) activity. Acts as a sulfur carrier protein that transfers sulfur from IscS to the molybdenum cofactor prior to its insertion into FDH. In Geobacillus kaustophilus (strain HTA426), this protein is Sulfur carrier protein FdhD.